We begin with the raw amino-acid sequence, 303 residues long: tRNA pseudouridine synthase B (303 aa).

Catalysis depends on Asp47, which acts as the Nucleophile.

The protein belongs to the pseudouridine synthase TruB family. Type 1 subfamily.

It carries out the reaction uridine(55) in tRNA = pseudouridine(55) in tRNA. Responsible for synthesis of pseudouridine from uracil-55 in the psi GC loop of transfer RNAs. The protein is tRNA pseudouridine synthase B of Ruegeria pomeroyi (strain ATCC 700808 / DSM 15171 / DSS-3) (Silicibacter pomeroyi).